Consider the following 215-residue polypeptide: 7-methyl-GTP pyrophosphatase (215 aa).

Aspartate 79 functions as the Proton acceptor in the catalytic mechanism.

The protein belongs to the Maf family. YceF subfamily. A divalent metal cation serves as cofactor.

Its subcellular location is the cytoplasm. It carries out the reaction N(7)-methyl-GTP + H2O = N(7)-methyl-GMP + diphosphate + H(+). In terms of biological role, nucleoside triphosphate pyrophosphatase that hydrolyzes 7-methyl-GTP (m(7)GTP). May have a dual role in cell division arrest and in preventing the incorporation of modified nucleotides into cellular nucleic acids. The polypeptide is 7-methyl-GTP pyrophosphatase (Burkholderia thailandensis (strain ATCC 700388 / DSM 13276 / CCUG 48851 / CIP 106301 / E264)).